We begin with the raw amino-acid sequence, 280 residues long: Large ribosomal subunit protein uL2 (280 aa).

Disordered stretches follow at residues 1 to 20 (MAIR…SVSM), 29 to 58 (PEKS…GGGH), and 225 to 280 (VMNP…NKKR). Over residues 45–58 (SHGHITTRHRGGGH) the composition is skewed to basic residues. Residues 253–269 (KEGRTRRPKRYSDDMIV) show a composition bias toward basic and acidic residues. Basic residues predominate over residues 270–280 (RRRRANKNKKR).

This sequence belongs to the universal ribosomal protein uL2 family. In terms of assembly, part of the 50S ribosomal subunit. Forms a bridge to the 30S subunit in the 70S ribosome.

One of the primary rRNA binding proteins. Required for association of the 30S and 50S subunits to form the 70S ribosome, for tRNA binding and peptide bond formation. It has been suggested to have peptidyltransferase activity; this is somewhat controversial. Makes several contacts with the 16S rRNA in the 70S ribosome. The polypeptide is Large ribosomal subunit protein uL2 (Corynebacterium efficiens (strain DSM 44549 / YS-314 / AJ 12310 / JCM 11189 / NBRC 100395)).